The chain runs to 1198 residues: Structural polyprotein (1198 aa).

The interaction with host EXOC1 stretch occupies residues 2–15 (TKKPGGPGKNRAIN). The hydrophobic; homodimerization of capsid protein C stretch occupies residues 37-72 (LLDGRGPVRFVLALITFFKFTALAPTKALLGRWKAV). Positions 106–127 (GGNEGSIMWLASLAVVIACAGA) are cleaved as a propeptide — ER anchor for the capsid protein C, removed in mature form by serine protease NS3. A helical transmembrane segment spans residues 110–130 (GSIMWLASLAVVIACAGAMKL). Asparagine 142 carries an N-linked (GlcNAc...) asparagine; by host glycan. The next 2 helical transmembrane spans lie at 254–274 (WIIRNPGYAFLAAVLGWMLGS) and 280–294 (VVFTILLLLVAPAYS). Cystine bridges form between cysteine 297–cysteine 324, cysteine 354–cysteine 410, cysteine 354–cysteine 415, cysteine 368–cysteine 399, cysteine 386–cysteine 410, and cysteine 386–cysteine 415. Residues 392–405 (DRGWGNGCGLFGKG) form a fusion peptide region. An N-linked (GlcNAc...) asparagine; by host glycan is attached at asparagine 448. 2 disulfide bridges follow: cysteine 484–cysteine 581 and cysteine 598–cysteine 629. Transmembrane regions (helical) follow at residues 747–767 (FGGMSWITQGLMGALLLWMGV) and 774–794 (IALAFLATGGVLVFLATNVHA). 6 cysteine pairs are disulfide-bonded: cysteine 798/cysteine 809, cysteine 849/cysteine 937, cysteine 973/cysteine 1017, cysteine 1074/cysteine 1123, cysteine 1085/cysteine 1106, and cysteine 1107/cysteine 1110. N-linked (GlcNAc...) asparagine; by host glycosylation is found at asparagine 924 and asparagine 1001. Residues 1151-1177 (MVDPFSAGPSGDVSGHPGSPSQEVDGQ) are disordered.

In terms of assembly, homodimer. Interacts (via N-terminus) with host EXOC1 (via C-terminus); this interaction results in EXOC1 degradation through the proteasome degradation pathway. Interacts with host CAPRIN1; this interaction is involved in the suppression of the integrated stress response. As to quaternary structure, forms heterodimers with envelope protein E in the endoplasmic reticulum and Golgi. Homodimer; in the endoplasmic reticulum and Golgi. Interacts with protein prM. Interacts with non-structural protein 1. Genome polyprotein: Specific enzymatic cleavages in vivo yield mature proteins. Cleavages in the lumen of endoplasmic reticulum are performed by host signal peptidase, whereas cleavages in the cytoplasmic side are performed by serine protease NS3. Signal cleavage at the 2K-4B site requires a prior NS3 protease-mediated cleavage at the 4A-2K site. Post-translationally, cleaved in post-Golgi vesicles by a host furin, releasing the mature small envelope protein M, and peptide pr. This cleavage is incomplete as up to 30% of viral particles still carry uncleaved prM. In terms of processing, N-glycosylated.

Its subcellular location is the secreted. The protein resides in the virion membrane. It is found in the host endoplasmic reticulum membrane. Functionally, plays a role in virus budding by binding to the cell membrane and gathering the viral RNA into a nucleocapsid that forms the core of a mature virus particle. During virus entry, may induce genome penetration into the host cytoplasm after hemifusion induced by the surface proteins. Can migrate to the cell nucleus where it modulates host functions. Overcomes the anti-viral effects of host EXOC1 by sequestering and degrading the latter through the proteasome degradation pathway. Inhibits the integrated stress response (ISR) in the infected cell by binding to host CAPRIN1. Its function is as follows. Inhibits RNA silencing by interfering with host Dicer. Prevents premature fusion activity of envelope proteins in trans-Golgi by binding to envelope protein E at pH6.0. After virion release in extracellular space, gets dissociated from E dimers. In terms of biological role, acts as a chaperone for envelope protein E during intracellular virion assembly by masking and inactivating envelope protein E fusion peptide. prM is the only viral peptide matured by host furin in the trans-Golgi network probably to avoid catastrophic activation of the viral fusion activity in acidic Golgi compartment prior to virion release. prM-E cleavage is inefficient, and many virions are only partially matured. These uncleaved prM would play a role in immune evasion. Functionally, may play a role in virus budding. Exerts cytotoxic effects by activating a mitochondrial apoptotic pathway through M ectodomain. May display a viroporin activity. Its function is as follows. Binds to host cell surface receptor and mediates fusion between viral and cellular membranes. Envelope protein is synthesized in the endoplasmic reticulum in the form of heterodimer with protein prM. They play a role in virion budding in the ER, and the newly formed immature particle is covered with 60 spikes composed of heterodimer between precursor prM and envelope protein E. The virion is transported to the Golgi apparatus where the low pH causes dissociation of PrM-E heterodimers and formation of E homodimers. prM-E cleavage is inefficient, and many virions are only partially matured. These uncleaved prM would play a role in immune evasion. May play a role in neuroinvasiveness. This is Structural polyprotein from Ardeidae (herons).